The sequence spans 174 residues: Large ribosomal subunit protein uL10 (174 aa).

Belongs to the universal ribosomal protein uL10 family. In terms of assembly, part of the ribosomal stalk of the 50S ribosomal subunit. The N-terminus interacts with L11 and the large rRNA to form the base of the stalk. The C-terminus forms an elongated spine to which L12 dimers bind in a sequential fashion forming a multimeric L10(L12)X complex.

Forms part of the ribosomal stalk, playing a central role in the interaction of the ribosome with GTP-bound translation factors. In Bordetella bronchiseptica (strain ATCC BAA-588 / NCTC 13252 / RB50) (Alcaligenes bronchisepticus), this protein is Large ribosomal subunit protein uL10.